The chain runs to 186 residues: Dynactin subunit 3 (186 aa).

Alanine 2 is modified (N-acetylalanine). Residues 135 to 157 (QQQDQCVEITEESKALLEEYNKT) are a coiled coil.

This sequence belongs to the dynactin subunit 3 family. Subunit of dynactin, a multiprotein complex part of a tripartite complex with dynein and a adapter, such as BICDL1, BICD2 or HOOK3. The dynactin complex is built around ACTR1A/ACTB filament and consists of an actin-related filament composed of a shoulder domain, a pointed end and a barbed end. Its length is defined by its flexible shoulder domain. The soulder is composed of 2 DCTN1 subunits, 4 DCTN2 and 2 DCTN3. The 4 DCNT2 (via N-terminus) bind the ACTR1A filament and act as molecular rulers to determine the length. The pointed end is important for binding dynein-dynactin cargo adapters. Consists of 4 subunits: ACTR10, DCNT4, DCTN5 and DCTN6. The barbed end is composed of a CAPZA1:CAPZB heterodimers, which binds ACTR1A/ACTB filament and dynactin and stabilizes dynactin.

It is found in the cytoplasm. Its subcellular location is the cytoskeleton. It localises to the microtubule organizing center. The protein localises to the centrosome. The protein resides in the chromosome. It is found in the centromere. Its subcellular location is the kinetochore. It localises to the spindle. The protein localises to the cleavage furrow. The protein resides in the midbody. In terms of biological role, part of the dynactin complex that activates the molecular motor dynein for ultra-processive transport along microtubules. Together with dynein may be involved in spindle assembly and cytokinesis. This is Dynactin subunit 3 (DCTN3) from Bos taurus (Bovine).